Consider the following 179-residue polypeptide: Large ribosomal subunit protein uL6 (179 aa).

The protein belongs to the universal ribosomal protein uL6 family. In terms of assembly, part of the 50S ribosomal subunit.

In terms of biological role, this protein binds to the 23S rRNA, and is important in its secondary structure. It is located near the subunit interface in the base of the L7/L12 stalk, and near the tRNA binding site of the peptidyltransferase center. This Mycobacterium leprae (strain Br4923) protein is Large ribosomal subunit protein uL6.